We begin with the raw amino-acid sequence, 550 residues long: MDAKLREDLFRRYVASLENRLEEGAAEGGGDRQGAKTEEALISTATALLGSYQADPGQRFRMLRFYDVVENSLRTQRGTSLRTVGTAFATLETICTNLLLFPWKKEYRCIKTFTGPYVYQLQSVLCDSDLRSLLRSMGYSREQELQYNVRDHPGGASHLRQLAFELLLAQAECRLLGEVVSMSRGFASELEAVELRRNTREDAAGCADALRRRDSLTGDLSRLSVRPLDIDRAHLRRSGRPSKSVDVTDSAGHWHQASKPVLKASLSLRKEPLFVDTEEDMKDEIIRPSPSLYPVAAPPSYSPVADFFPIQSPPSEPYSYHLSSLDEVDLYTERGLGGHQTPSRPPSREPRDSWVLKGHMMKCQGCGMGCPSLSSCQRCDMILCSSCHAVDPAPCCGFQDYTKTSRPLDGYMPIKEKLSVYSSAHSHTHPHPHPLPHAQSHSLLLDKAVMSSKLFPSKPVGSGPSPVGSLVSSGSSSSGGERLSVGGSRCGFCNKPGASHTCVNCSKVSCDTCMSLYASDLCTRKNPHHNFVPNHQLNFKSSTISHLVYR.

A PUB domain is found at 83–156 (TVGTAFATLE…YNVRDHPGGA (74 aa)). The short motif at 320–337 (YHLSSLDEVDLYTERGLG) is the PIM motif element. The interval 457-480 (SKPVGSGPSPVGSLVSSGSSSSGG) is disordered.

The protein belongs to the SPATA2 family.

The protein localises to the cytoplasm. Its subcellular location is the nucleus. Its function is as follows. Bridging factor that mediates the recruitment of cyld to the LUBAC complex, thereby regulating TNF-alpha-induced necroptosis. Required to activate the 'Met-1'- (linear) and 'Lys-63'-linked deubiquitinase activities of cyld. This is Spermatogenesis-associated protein 2 from Danio rerio (Zebrafish).